Consider the following 210-residue polypeptide: Cell wall protein SRL1 (210 aa).

An N-terminal signal peptide occupies residues 1 to 19; it reads MLQSVVFFALLTFASSVSA. A glycan (N-linked (GlcNAc...) asparagine) is linked at Asn-23. Disordered regions lie at residues 80-99 and 118-142; these read SLST…HEIT and LSPS…VKSF. Residues 118–127 are compositionally biased toward low complexity; the sequence is LSPSSTAASV. Positions 132–141 are enriched in basic and acidic residues; sequence SNNKDAKVKS. N-linked (GlcNAc...) asparagine glycans are attached at residues Asn-174, Asn-200, and Asn-206.

The protein resides in the secreted. Its subcellular location is the cell wall. The protein localises to the cell surface. Required to stabilize the cell wall in the absence of multiple GPI-anchored mannoproteins. In Saccharomyces cerevisiae (strain ATCC 204508 / S288c) (Baker's yeast), this protein is Cell wall protein SRL1 (SRL1).